The primary structure comprises 545 residues: Glucose-6-phosphate isomerase (545 aa).

Glu-351 functions as the Proton donor in the catalytic mechanism. Active-site residues include His-382 and Lys-510.

The protein belongs to the GPI family.

The protein localises to the cytoplasm. It catalyses the reaction alpha-D-glucose 6-phosphate = beta-D-fructose 6-phosphate. Its pathway is carbohydrate biosynthesis; gluconeogenesis. The protein operates within carbohydrate degradation; glycolysis; D-glyceraldehyde 3-phosphate and glycerone phosphate from D-glucose: step 2/4. Catalyzes the reversible isomerization of glucose-6-phosphate to fructose-6-phosphate. This is Glucose-6-phosphate isomerase from Shewanella woodyi (strain ATCC 51908 / MS32).